Here is a 474-residue protein sequence, read N- to C-terminus: Dihydrolipoyl dehydrogenase (474 aa).

FAD contacts are provided by residues 34–51, Lys60, and Gly124; that span reads EGNP…GGTC. Cys51 and Cys56 are disulfide-bonded. NAD(+)-binding positions include 189–193, Glu212, Val246, and 278–281; these read GAGVI and SVGR. Residues Asp321 and Ala329 each contribute to the FAD site. His453 acts as the Proton acceptor in catalysis.

Belongs to the class-I pyridine nucleotide-disulfide oxidoreductase family. It depends on FAD as a cofactor.

It localises to the cytoplasm. The catalysed reaction is N(6)-[(R)-dihydrolipoyl]-L-lysyl-[protein] + NAD(+) = N(6)-[(R)-lipoyl]-L-lysyl-[protein] + NADH + H(+). Its function is as follows. The branched-chain alpha-keto dehydrogenase complex catalyzes the overall conversion of alpha-keto acids to acyl-CoA and CO(2). It contains multiple copies of 3 enzymatic components: branched-chain alpha-keto acid decarboxylase (E1), lipoamide acyltransferase (E2) and lipoamide dehydrogenase (E3). The polypeptide is Dihydrolipoyl dehydrogenase (odhL) (Cupriavidus necator (strain ATCC 17699 / DSM 428 / KCTC 22496 / NCIMB 10442 / H16 / Stanier 337) (Ralstonia eutropha)).